A 331-amino-acid polypeptide reads, in one-letter code: Beta-ketoacyl-[acyl-carrier-protein] synthase III (331 aa).

Active-site residues include C113 and H253. The tract at residues 254 to 258 is ACP-binding; that stretch reads QANTR. N283 is an active-site residue.

It belongs to the thiolase-like superfamily. FabH family. In terms of assembly, homodimer.

The protein resides in the cytoplasm. The enzyme catalyses malonyl-[ACP] + acetyl-CoA + H(+) = 3-oxobutanoyl-[ACP] + CO2 + CoA. It participates in lipid metabolism; fatty acid biosynthesis. Catalyzes the condensation reaction of fatty acid synthesis by the addition to an acyl acceptor of two carbons from malonyl-ACP. Catalyzes the first condensation reaction which initiates fatty acid synthesis and may therefore play a role in governing the total rate of fatty acid production. Possesses both acetoacetyl-ACP synthase and acetyl transacylase activities. Its substrate specificity determines the biosynthesis of branched-chain and/or straight-chain of fatty acids. The protein is Beta-ketoacyl-[acyl-carrier-protein] synthase III of Desulfitobacterium hafniense (strain Y51).